The sequence spans 1808 residues: MGLPSQVLACAILGLLYQHASGGLIKRIIRQKRETGLNVTLPEDNQPVVFNHVYNIKLPVGSLCSVDLDTASGDADLKAEIEPVKNYEEHTVNEGNQIVFTHRINIPRRACGCAAAPDIKDLLSRLEELEGLVSSLREQCASGAGCCPNSQTAEGRLDTAPYCSGHGNYSTEICGCVCEPGWKGPNCSEPACPRNCLNRGLCVRGKCICEEGFTGEDCSQAACPSDCNDQGKCVDGVCVCFEGYTGPDCGEELCPHGCGIHGRCVGGRCVCHEGFTGEDCNEPLCPNNCHNRGRCVDNECVCDEGYTGEDCGELICPNDCFDRGRCINGTCFCEEGYTGEDCGELTCPNNCNGNGRCENGLCVCHEGFVGDDCSQKRCPKDCNNRGHCVDGRCVCHEGYLGEDCGELRCPNDCHNRGRCINGQCVCDEGFIGEDCGELRCPNDCHNRGRCVNGQCECHEGFIGEDCGELRCPNDCNSHGRCVNGQCVCDEGYTGEDCGELRCPNDCHNRGRCVEGRCVCDNGFMGEDCGELSCPNDCHQHGRCVDGRCVCHEGFTGEDCRERSCPNDCNNVGRCVEGRCVCEEGYMGIDCSDVSPPTELTVTNVTDKTVNLEWKHENLVNEYLVTYVPTSSGGLDLQFTVPGNQTSATIHELEPGVEYFIRVFAILKNKKSIPVSARVATYLPAPEGLKFKSVRETSVQVEWDPLSISFDGWELVFRNMQKKDDNGDITSSLKRPETSYMQPGLAPGQQYNVSLHIVKNNTRGPGLSRVITTKLDAPSQIEAKDVTDTTALITWSKPLAEIEGIELTYGPKDVPGDRTTIDLSEDENQYSIGNLRPHTEYEVTLISRRGDMESDPAKEVFVTDLDAPRNLKRVSQTDNSITLEWKNSHANIDNYRIKFAPISGGDHTELTVPKGNQATTRATLTGLRPGTEYGIGVTAVRQDRESAPATINAGTDLDNPKDLEVSDPTETTLSLRWRRPVAKFDRYRLTYVSPSGKKNEMEIPVDSTSFILRGLDAGTEYTISLVAEKGRHKSKPTTIKGSTEEEPELGNLSVSETGWDGFQLTWTAADGAYENFVIQVQQSDNPEETWNITVPGGQHSVNVTGLKANTPYNVTLYGVIRGYRTKPLYVETTTGAHPEVGELTVSDITPESFNLSWTTTNGDFDAFTIEIIDSNRLLEPMEFNISGNSRTAHISGLSPSTDFIVYLYGISHGFRTQAISAAATTEAEPEVDNLLVSDATPDGFRLSWTADDGVFDSFVLKIRDTKRKSDPLELIVPGHERTHDITGLKEGTEYEIELYGVSSGRRSQPINSVATTVVGSPKGISFSDITENSATVSWTPPRSRVDSYRVSYVPITGGTPNVVTVDGSKTRTKLVKLVPGVDYNVNIISVKGFEESEPISGILKTALDSPSGLVVMNITDSEALATWQPAIAAVDNYIVSYSSEDEPEVTQMVSGNTVEYDLNGLRPATEYTLRVHAVKDAQKSETLSTQFTTGLDAPKDLSATEVQSETAVITWRPPRAPVTDYLLTYESIDGRVKEVILDPETTSYTLTELSPSTQYTVKLQALSRSMRSKMIQTVFTTTGLLYPYPKDCSQALLNGEVTSGLYTIYLNGDRTQPLQVFCDMAEDGGGWIVFLRRQNGKEDFYRNWKNYVAGFGDPKDEFWIGLENLHKISSQGQYELRVDLRDRGETAYAVYDKFSVGDAKTRYRLRVDGYSGTAGDSMTYHNGRSFSTFDKDNDSAITNCALSYKGAFWYKNCHRVNLMGRYGDNNHSQGVNWFHWKGHEYSIQFAEMKLRPSSFRNLEGRRKRA.

Positions 1–22 (MGLPSQVLACAILGLLYQHASG) are cleaved as a signal peptide. The propeptide occupies 23–33 (GLIKRIIRQKR). Residue Asn38 is glycosylated (N-linked (GlcNAc...) asparagine). Ser72 carries an O-linked (Xyl...) (chondroitin sulfate) serine glycan. Residues 118-142 (DIKDLLSRLEELEGLVSSLREQCAS) are a coiled coil. Asn168 and Asn186 each carry an N-linked (GlcNAc...) asparagine glycan. The region spanning 176 to 188 (CVCEPGWKGPNCS) is the EGF-like 1; incomplete domain. EGF-like domains lie at 188–219 (SEPA…EDCS), 219–250 (SQAA…PDCG), 250–281 (GEEL…EDCN), 281–312 (NEPL…EDCG), 312–343 (GELI…EDCG), 343–374 (GELT…DDCS), 374–405 (SQKR…EDCG), 405–436 (GELR…EDCG), 436–467 (GELR…EDCG), 467–498 (GELR…EDCG), 498–529 (GELR…EDCG), 529–560 (GELS…EDCR), and 560–591 (RERS…IDCS). Cystine bridges form between Cys192/Cys202, Cys196/Cys207, Cys209/Cys218, Cys223/Cys233, Cys227/Cys238, Cys240/Cys249, Cys254/Cys264, Cys258/Cys269, Cys271/Cys280, Cys285/Cys295, Cys289/Cys300, Cys302/Cys311, Cys316/Cys326, Cys320/Cys331, Cys333/Cys342, Cys347/Cys357, Cys351/Cys362, Cys364/Cys373, Cys378/Cys388, Cys382/Cys393, Cys395/Cys404, Cys409/Cys419, Cys413/Cys424, Cys426/Cys435, Cys440/Cys450, Cys444/Cys455, Cys457/Cys466, Cys471/Cys481, Cys475/Cys486, Cys488/Cys497, Cys502/Cys512, Cys506/Cys517, Cys519/Cys528, Cys533/Cys543, Cys537/Cys548, Cys550/Cys559, Cys564/Cys574, Cys568/Cys579, and Cys581/Cys590. A glycan (N-linked (GlcNAc...) asparagine) is linked at Asn328. Fibronectin type-III domains are found at residues 595–685 (PPTE…LPAP), 686–775 (EGLK…TKLD), 776–866 (APSQ…DLDA), 867–957 (PRNL…TDLD), 958–1046 (NPKD…EEEP), 1047–1138 (ELGN…AHPE), 1139–1228 (VGEL…EAEP), 1229–1318 (EVDN…TVVG), 1319–1408 (SPKG…ALDS), 1409–1495 (PSGL…TGLD), and 1496–1584 (APKD…TGLL). N-linked (GlcNAc...) asparagine glycosylation is found at Asn603, Asn643, Asn751, and Asn759. N-linked (GlcNAc...) asparagine glycosylation is found at Asn1050, Asn1090, Asn1101, Asn1112, Asn1153, and Asn1183. Asn1416 carries an N-linked (GlcNAc...) asparagine glycan. The Fibrinogen C-terminal domain maps to 1582–1797 (GLLYPYPKDC…FAEMKLRPSS (216 aa)). N-linked (GlcNAc...) asparagine glycosylation is found at Asn1736 and Asn1769.

The protein belongs to the tenascin family. As to quaternary structure, homohexamer; disulfide-linked. A homotrimer may be formed in the triple coiled-coil region and may be stabilized by disulfide rings at both ends. Two of such half-hexabrachions may be disulfide linked within the central globule. Interacts with CSPG5. As to expression, expressed in the brain.

The protein resides in the secreted. Its subcellular location is the extracellular space. It localises to the extracellular matrix. In terms of biological role, extracellular matrix protein implicated in guidance of migrating neurons as well as axons during development, synaptic plasticity as well as neuronal regeneration. Ligand for integrins alpha-8/beta-1, alpha-9/beta-1, alpha-V/beta-3 and alpha-V/beta-6. This chain is Tenascin (TNC), found in Gallus gallus (Chicken).